Here is a 200-residue protein sequence, read N- to C-terminus: Coiled-coil domain-containing protein 28B (200 aa).

Met-1 bears the N-acetylmethionine mark. Residues 1-10 show a composition bias toward basic residues; the sequence is MEDKKKKRSP. Residues 1 to 49 are disordered; it reads MEDKKKKRSPKPCLTQPAQAPGTLRRVPVPTSHSGSLALGLPHLPSPKQ. A phosphoserine mark is found at Ser-46 and Ser-115. Acidic residues predominate over residues 140 to 152; it reads GEEEDEEEEEDGV. The segment at 140-165 is disordered; it reads GEEEDEEEEEDGVTEGLPEEQKKTMA. Positions 158–189 form a coiled coil; it reads EEQKKTMADRNLDQLLSNLEDLSNSIQKLHLA.

Interacts with BBS1, BBS2, BBS4, BBS5, BBS6, BBS7 and TTC8/BBS8. Interacts with MAPKAP1/SIN1 isoform 1 and RICTOR. In terms of tissue distribution, expressed in the retina, pericardium and limb epithelium.

The protein resides in the cytoplasm. The protein localises to the cytoskeleton. Its subcellular location is the microtubule organizing center. It is found in the centrosome. Its function is as follows. Involved in ciliogenesis. Regulates cilia length through its interaction with MAPKAP1/SIN1 but independently of mTORC2 complex. Modulates mTORC2 complex assembly and function, possibly enhances AKT1 phosphorylation. Does not seem to modulate assembly and function of mTORC1 complex. In Mus musculus (Mouse), this protein is Coiled-coil domain-containing protein 28B (Ccdc28b).